Consider the following 351-residue polypeptide: MHFAYILILLILTPRVDSSWWYIGALGARVICDNIPGLVNKQRQLCQKHPDIMQAIGEGAKEWIRECQHQFRHHRWNCSTLDRDHTVFGRVMLRSSRETAFVYAISYAGVVYAITRACSQGELKSCNCDPKKRGRSKDERGEFDWGGCSDHIDFGIKFPKDFVDAKEKRLKDARALMNLHNNRCGRMAVKRFMNLECKCHGVSGSCTLRTCWRAMSDFRKTGDFLRRRYNGAIQVTMNQDGSGFAVANQNFRKATKKDLVYFENSPDYCVMDKTAGSLGTAGRVCDKVSRGTDGCEVMCCGRGYDTTRVTRITKCECKFHWCCAVRCKECEETVDVHTCKAPKRAEWLDQT.

An N-terminal signal peptide occupies residues 1–16 (MHFAYILILLILTPRV). Cystine bridges form between Cys67-Cys78, Cys118-Cys126, Cys128-Cys148, Cys197-Cys211, Cys199-Cys206, Cys269-Cys300, Cys285-Cys295, Cys299-Cys339, Cys315-Cys330, Cys317-Cys327, and Cys322-Cys323. Asn77 carries an N-linked (GlcNAc...) asparagine glycan. The O-palmitoleoyl serine; by PORCN moiety is linked to residue Ser203.

It belongs to the Wnt family. Palmitoleoylation is required for efficient binding to frizzled receptors. Depalmitoleoylation leads to Wnt signaling pathway inhibition. As to expression, expressed maternally in both vegetal and animal blastomeres with enrichment in the animal hemisphere. Expressed zygotically near the prosencephalic-mesencephalic boundary of the developing brain in neurula and tailbud stages, and also in non-brain areas at tadpole stages.

The protein localises to the secreted. It is found in the extracellular space. The protein resides in the extracellular matrix. Ligand for members of the frizzled family of seven transmembrane receptors. Functions in the canonical Wnt/beta-catenin signaling pathway. The sequence is that of Protein Wnt-2b-A (wnt2b-a) from Xenopus laevis (African clawed frog).